Here is a 220-residue protein sequence, read N- to C-terminus: Deoxyribose-phosphate aldolase (220 aa).

Asp-89 serves as the catalytic Proton donor/acceptor. Lys-151 functions as the Schiff-base intermediate with acetaldehyde in the catalytic mechanism. The active-site Proton donor/acceptor is Lys-180.

Belongs to the DeoC/FbaB aldolase family. DeoC type 1 subfamily.

It localises to the cytoplasm. The catalysed reaction is 2-deoxy-D-ribose 5-phosphate = D-glyceraldehyde 3-phosphate + acetaldehyde. It participates in carbohydrate degradation; 2-deoxy-D-ribose 1-phosphate degradation; D-glyceraldehyde 3-phosphate and acetaldehyde from 2-deoxy-alpha-D-ribose 1-phosphate: step 2/2. Functionally, catalyzes a reversible aldol reaction between acetaldehyde and D-glyceraldehyde 3-phosphate to generate 2-deoxy-D-ribose 5-phosphate. This chain is Deoxyribose-phosphate aldolase, found in Staphylococcus saprophyticus subsp. saprophyticus (strain ATCC 15305 / DSM 20229 / NCIMB 8711 / NCTC 7292 / S-41).